A 243-amino-acid chain; its full sequence is Small ribosomal subunit protein uS2 (243 aa).

Belongs to the universal ribosomal protein uS2 family.

The polypeptide is Small ribosomal subunit protein uS2 (Chromobacterium violaceum (strain ATCC 12472 / DSM 30191 / JCM 1249 / CCUG 213 / NBRC 12614 / NCIMB 9131 / NCTC 9757 / MK)).